The chain runs to 559 residues: 3-phosphoinositide-dependent protein kinase 1 (559 aa).

Tyrosine 9 is subject to Phosphotyrosine; by SRC and INSR. Serine 25 is modified (phosphoserine). Residues 25–83 form a disordered region; the sequence is SPSMVRSQTEPGSSPGIPSGVSRQGSTMDGTTAEARPSTNPLQQHPAQLPPQPRKKRPE. Over residues 35-44 the composition is skewed to low complexity; it reads PGSSPGIPSG. Positions 45–54 are enriched in polar residues; that stretch reads VSRQGSTMDG. The 261-residue stretch at 85–345 folds into the Protein kinase domain; it reads FKFGKILGEG…YGPLKAHPFF (261 aa). Residues 95-97 and lysine 114 contribute to the ATP site; that span reads SFS. The tract at residues 116-160 is PIF-pocket; that stretch reads LEKRHIIKENKVPYVTRERDVMSRLDHPFFVKLYFTFQDDEKLYF. ATP-binding positions include 163 to 165 and glutamate 169; that span reads SYA. Residue aspartate 208 is the Proton acceptor of the active site. Glutamate 212 and aspartate 226 together coordinate ATP. A Phosphoserine modification is found at serine 244. An N6-acetyllysine modification is found at lysine 307. At threonine 357 the chain carries Phosphothreonine; by MELK. Residues tyrosine 376 and tyrosine 379 each carry the phosphotyrosine; by SRC and INSR modification. Position 396 is a phosphoserine (serine 396). Residue serine 397 is modified to Phosphoserine; by MAP3K5. Phosphoserine is present on serine 399. Residue serine 401 is modified to Phosphoserine; by MAP3K5. Phosphoserine is present on serine 413. The PH domain maps to 462-553; the sequence is KMGPVDKRKG…EVWRQQYQSN (92 aa). Serine 504 is modified (phosphoserine; by PKC/PRKCQ). Position 516 is a phosphothreonine; by autocatalysis (threonine 516). Phosphoserine; by PKC/PRKCQ is present on serine 532.

Belongs to the protein kinase superfamily. AGC Ser/Thr protein kinase family. PDPK1 subfamily. As to quaternary structure, homodimer in its autoinhibited state. Active as monomer. Interacts with NPRL2, PAK1, PTK2B, GRB14, STRAP and IKKB. The Tyr-9 phosphorylated form interacts with SRC, RASA1 and CRK (via their SH2 domains). Interacts with SGK3 in a phosphorylation-dependent manner. The tyrosine-phosphorylated form interacts with PTPN6. The Ser-244 phosphorylated form interacts with YWHAH and YWHAQ. Binds INSR in response to insulin. Interacts (via PH domain) with SMAD3, SMAD4 and SMAD7. Interacts with PKN2; the interaction stimulates PDPK1 autophosphorylation, its PI(3,4,5)P3-dependent kinase activity toward 'Ser-473' of AKT1 but also activates its kinase activity toward PRKCD and PRKCZ. Interacts with PKN1 (via C-terminus) and PPARG. Post-translationally, phosphorylation on Ser-244 in the activation loop is required for full activity. PDPK1 itself can autophosphorylate Ser-244, leading to its own activation. Autophosphorylation is inhibited by the apoptotic C-terminus cleavage product of PKN2. Tyr-9 phosphorylation is critical for stabilization of both PDPK1 and the PDPK1/SRC complex via HSP90-mediated protection of PDPK1 degradation. Angiotensin II stimulates the tyrosine phosphorylation of PDPK1 in vascular smooth muscle in a calcium- and SRC-dependent manner. Phosphorylated on Tyr-9, Tyr-376 and Tyr-379 by INSR in response to insulin. Palmitate negatively regulates autophosphorylation at Ser-244 and palmitate-induced phosphorylation at Ser-532 and Ser-504 by PKC/PRKCQ negatively regulates its ability to phosphorylate PKB/AKT1. Phosphorylation at Thr-357 by MELK partially inhibits kinase activity, the inhibition is cooperatively enhanced by phosphorylation at Ser-397 and Ser-401 by MAP3K5. Monoubiquitinated in the kinase domain, deubiquitinated by USP4. Highly expressed in heart, brain, liver and testis, also expressed in embryonic cells.

The protein resides in the cytoplasm. It localises to the nucleus. The protein localises to the cell membrane. Its subcellular location is the cell junction. It is found in the focal adhesion. The catalysed reaction is L-seryl-[protein] + ATP = O-phospho-L-seryl-[protein] + ADP + H(+). It catalyses the reaction L-threonyl-[protein] + ATP = O-phospho-L-threonyl-[protein] + ADP + H(+). With respect to regulation, homodimerization regulates its activity by maintaining the kinase in an autoinhibitory conformation. NPRL2 down-regulates its activity by interfering with tyrosine phosphorylation at the Tyr-9, Tyr-376 and Tyr-379 residues. The 14-3-3 protein YWHAQ acts as a negative regulator by association with the residues surrounding the Ser-244 residue. STRAP positively regulates its activity by enhancing its autophosphorylation and by stimulating its dissociation from YWHAQ. SMAD2, SMAD3, SMAD4 and SMAD7 also positively regulate its activity by stimulating its dissociation from YWHAQ. Activated by phosphorylation on Tyr-9, Tyr-376 and Tyr-379 by INSR in response to insulin. Functionally, serine/threonine kinase which acts as a master kinase, phosphorylating and activating a subgroup of the AGC family of protein kinases. Its targets include: protein kinase B (PKB/AKT1, PKB/AKT2, PKB/AKT3), p70 ribosomal protein S6 kinase (RPS6KB1), p90 ribosomal protein S6 kinase (RPS6KA1, RPS6KA2 and RPS6KA3), cyclic AMP-dependent protein kinase (PRKACA), protein kinase C (PRKCD and PRKCZ), serum and glucocorticoid-inducible kinase (SGK1, SGK2 and SGK3), p21-activated kinase-1 (PAK1), TSSK3, protein kinase PKN (PKN1 and PKN2). Plays a central role in the transduction of signals from insulin by providing the activating phosphorylation to PKB/AKT1, thus propagating the signal to downstream targets controlling cell proliferation and survival, as well as glucose and amino acid uptake and storage. Negatively regulates the TGF-beta-induced signaling by: modulating the association of SMAD3 and SMAD7 with TGF-beta receptor, phosphorylating SMAD2, SMAD3, SMAD4 and SMAD7, preventing the nuclear translocation of SMAD3 and SMAD4 and the translocation of SMAD7 from the nucleus to the cytoplasm in response to TGF-beta. Activates PPARG transcriptional activity and promotes adipocyte differentiation. Activates the NF-kappa-B pathway via phosphorylation of IKKB. The tyrosine phosphorylated form is crucial for the regulation of focal adhesions by angiotensin II. Controls proliferation, survival, and growth of developing pancreatic cells. Participates in the regulation of Ca(2+) entry and Ca(2+)-activated K(+) channels of mast cells. Essential for the motility of vascular endothelial cells (ECs) and is involved in the regulation of their chemotaxis. Plays a critical role in cardiac homeostasis by serving as a dual effector for cell survival and beta-adrenergic response. Plays an important role during thymocyte development by regulating the expression of key nutrient receptors on the surface of pre-T cells and mediating Notch-induced cell growth and proliferative responses. Provides negative feedback inhibition to toll-like receptor-mediated NF-kappa-B activation in macrophages. The polypeptide is 3-phosphoinositide-dependent protein kinase 1 (Pdpk1) (Mus musculus (Mouse)).